We begin with the raw amino-acid sequence, 407 residues long: Putative D-cysteine desulfhydrase 2, mitochondrial (407 aa).

The transit peptide at M1–T34 directs the protein to the mitochondrion. Residues P39 to P72 form a disordered region. N6-(pyridoxal phosphate)lysine is present on K90.

It belongs to the ACC deaminase/D-cysteine desulfhydrase family. Pyridoxal 5'-phosphate serves as cofactor.

The protein localises to the mitochondrion. It carries out the reaction D-cysteine + H2O = hydrogen sulfide + pyruvate + NH4(+) + H(+). Its function is as follows. Catalyzes the production of hydrogen sulfide (H2S) from cysteine. This is Putative D-cysteine desulfhydrase 2, mitochondrial from Oryza sativa subsp. japonica (Rice).